Here is a 544-residue protein sequence, read N- to C-terminus: MAAKDVKFGGDARQRMLRGVDILADAVKVTLGPKGRNVVIDKSFGAPRITKDGVSVAKEIELADKFENMGAQMVREVASKTNDKAGDGTTTATVLTQAIVREGAKAVAAGLNPMDLKRGIDKAVAVVIEDLKANSRKITNPSETAQVGTISANGESEIGRMISEAMQKVGNEGVITVEEAKGIQTELDVVEGMQFDRGYVSPYFITNPEKMIAELDNPYILIHEKKLAQLQPLLPLLESVVQSGRPLLIIAEDVEGEALATLVVNKLRGGLKIAAVKAPGFGDRRKAMLEDIAILTGGTVISEDLGIKLETVTLQQLGTAKRVLIEKENTTIVEGAGSPDDIKGRCSQIRAQAEETTSDYDREKLQERLAKLAGGVAVIRVGGSTEVEVKERKDRVDDALHATRAAVEEGIVPGGGVALARASLKLADLGYDNGDQKVGIEIIRRALQSPLRQISENAGEDGAVIAGKVLENGTYNFGFDAQTGEFKDLVSAGIIDPAKVVRTALQDAASVAALLITTEAMIAEKPEKKAPAGAPPGGMGDMDF.

Residues 30–33 (TLGP), Lys-51, 87–91 (DGTTT), Gly-415, and Asp-496 contribute to the ATP site.

The protein belongs to the chaperonin (HSP60) family. Forms a cylinder of 14 subunits composed of two heptameric rings stacked back-to-back. Interacts with the co-chaperonin GroES.

The protein localises to the cytoplasm. The catalysed reaction is ATP + H2O + a folded polypeptide = ADP + phosphate + an unfolded polypeptide.. In terms of biological role, together with its co-chaperonin GroES, plays an essential role in assisting protein folding. The GroEL-GroES system forms a nano-cage that allows encapsulation of the non-native substrate proteins and provides a physical environment optimized to promote and accelerate protein folding. This Granulibacter bethesdensis (strain ATCC BAA-1260 / CGDNIH1) protein is Chaperonin GroEL.